Consider the following 1058-residue polypeptide: Isoleucine--tRNA ligase (1058 aa).

The 'HIGH' region motif lies at 48-58; the sequence is PYTTGHIHLGT. A 'KMSKS' region motif is present at residues 596–600; that stretch reads KMSKS. ATP is bound at residue lysine 599.

Belongs to the class-I aminoacyl-tRNA synthetase family. IleS type 2 subfamily. As to quaternary structure, monomer. Requires Zn(2+) as cofactor.

It localises to the cytoplasm. The enzyme catalyses tRNA(Ile) + L-isoleucine + ATP = L-isoleucyl-tRNA(Ile) + AMP + diphosphate. Catalyzes the attachment of isoleucine to tRNA(Ile). As IleRS can inadvertently accommodate and process structurally similar amino acids such as valine, to avoid such errors it has two additional distinct tRNA(Ile)-dependent editing activities. One activity is designated as 'pretransfer' editing and involves the hydrolysis of activated Val-AMP. The other activity is designated 'posttransfer' editing and involves deacylation of mischarged Val-tRNA(Ile). The polypeptide is Isoleucine--tRNA ligase (Methanosarcina mazei (strain ATCC BAA-159 / DSM 3647 / Goe1 / Go1 / JCM 11833 / OCM 88) (Methanosarcina frisia)).